The chain runs to 565 residues: MSSAGIATLSPLLDQFCFAPHGEPRLQQLDSIVIFLAMPGVAPMPMRVLHSDSVASVKLRIQQFKGFVTTKQRLVFSGHELSLNNSHVRDYGLTDGNVLHLVVRLADLRAISIETANGKKFQFQVESCCNVGYLKDKLSAESGQQLGSLKDQRLVFDGEELEDNQLIADISKKGAAVIHLFIRRPAKVQTQQGDKETVVTVVTPKDNDNLQTDALNLAKPAKGKPAPVEPIIANGKVKLSPAVMEMIYSTISGIENGYLPVMSTEGSGGVYFMKDSSGESNVAVFKPIDEEPMAKNNPRGLPLSTDGEGLKRGTRVGEGALREVAAYILDHPVYGCKSCDVPGFSGVPPTALVRCFHMGKGSNKVGSLQLFVDNNGSCEDMGPRAFPVKEVQKIAILDIRLANADRHAGNILVCQDGEDHLKLIPIDHGYCLPEKFEDCTFEWLYWPQAREPFGPETAAYIGSLDADKDIALLKFHGWALSPQCARVLRISTMLLKKGAERGLTPYDIGSILCRQTVKKESEIEAIIEEAEDAILPGTSEETFLETISEIMDFHLDKLAVKLKKF.

Ubiquitin-like domains lie at 32-104 (IVIF…LVVR) and 109-187 (RAIS…RPAK). In terms of domain architecture, PI3K/PI4K catalytic spans 257–542 (GYLPVMSTEG…AILPGTSEET (286 aa)). The G-loop stretch occupies residues 263–269 (STEGSGG). Residues 264-270 (TEGSGGV) and lysine 286 contribute to the ATP site. The disordered stretch occupies residues 291–311 (EPMAKNNPRGLPLSTDGEGLK). An ATP-binding site is contributed by 369 to 372 (QLFV). Residues 402–410 (ANADRHAGN) form a catalytic loop region. The tract at residues 425–451 (PIDHGYCLPEKFEDCTFEWLYWPQARE) is activation loop. Residue aspartate 427 coordinates ATP.

It belongs to the PI3/PI4-kinase family. Type II PI4K subfamily. In terms of assembly, interacts with FTIP1 and RPN10. Specifically expressed in the phloem including companion cells.

The protein resides in the nucleus. Its subcellular location is the endoplasmic reticulum. It catalyses the reaction a 1,2-diacyl-sn-glycero-3-phospho-(1D-myo-inositol) + ATP = a 1,2-diacyl-sn-glycero-3-phospho-(1D-myo-inositol 4-phosphate) + ADP + H(+). Functionally, the phosphorylation of phosphatidylinositol (PI) to PI4P is the first committed step in the generation of phosphatidylinositol 4,5-bisphosphate (PIP2), a precursor of the second messenger inositol 1,4,5-trisphosphate (InsP3). Involved in the control of flowering under long day conditions by promoting degradation of FTIP1. Recruits FTIP1 for degradation by the 26S proteasome in leaves, which affects RFT1 transport to the shoot apical meristem (SAM). This is Phosphatidylinositol 4-kinase gamma 4 from Oryza sativa subsp. japonica (Rice).